The sequence spans 102 residues: NADH-quinone oxidoreductase subunit K (102 aa).

Transmembrane regions (helical) follow at residues 6-26, 30-50, and 62-82; these read FEHA…ALLI, LIVM…AFIA, and VMFL…LGLG.

It belongs to the complex I subunit 4L family. In terms of assembly, NDH-1 is composed of 14 different subunits. Subunits NuoA, H, J, K, L, M, N constitute the membrane sector of the complex.

It localises to the cell inner membrane. The catalysed reaction is a quinone + NADH + 5 H(+)(in) = a quinol + NAD(+) + 4 H(+)(out). Functionally, NDH-1 shuttles electrons from NADH, via FMN and iron-sulfur (Fe-S) centers, to quinones in the respiratory chain. The immediate electron acceptor for the enzyme in this species is believed to be ubiquinone. Couples the redox reaction to proton translocation (for every two electrons transferred, four hydrogen ions are translocated across the cytoplasmic membrane), and thus conserves the redox energy in a proton gradient. The sequence is that of NADH-quinone oxidoreductase subunit K from Methylococcus capsulatus (strain ATCC 33009 / NCIMB 11132 / Bath).